Reading from the N-terminus, the 229-residue chain is Flagellar calcium-binding protein TB-1.7G (229 aa).

The segment at 1–25 (GSKNASNPKDGAASKGGKDGKTTAD) is disordered. Positions 16–25 (GGKDGKTTAD) are enriched in basic and acidic residues. 4 consecutive EF-hand domains span residues 44–79 (ESKS…ILKL), 80–115 (DEFT…LVEF), 126–161 (YDIF…LKEW), and 163–198 (VDIT…KKLQ). The Ca(2+) site is built by aspartate 57, asparagine 59, threonine 61, lysine 63, and glutamate 68. 8 residues coordinate Ca(2+): aspartate 139, aspartate 141, serine 143, glutamate 150, aspartate 176, asparagine 178, serine 180, and glutamate 187. Positions 202-229 (DPDDEENGANEGDGANAGDGVPAAEGSA) are disordered. A compositionally biased stretch (low complexity) spans 210–221 (ANEGDGANAGDG).

Belongs to the calflagin family.

It is found in the cell projection. Its subcellular location is the cilium. The protein resides in the flagellum. Its function is as follows. May contribute to the rapid motility of the trypanosomes, playing a role either in flagellar structure or in calcium metabolism. Could alternate between a GDP-bound inactive form to a calcium/GTP-bound active form. In Trypanosoma brucei brucei, this protein is Flagellar calcium-binding protein TB-1.7G.